We begin with the raw amino-acid sequence, 1431 residues long: Zinc finger protein 687b (1431 aa).

Disordered stretches follow at residues 24-481 and 504-538; these read KEAI…RPLK and KGGA…TTAG. The segment covering 61–73 has biased composition (low complexity); it reads SPSPSTDSQSDPS. Residues 103-122 show a composition bias toward polar residues; sequence GFVSSGGSVHMSQSRGQPNG. Low complexity-rich tracts occupy residues 174-188, 196-209, and 217-248; these read MQLL…EMNL, APAN…AASP, and LLST…ASSP. Over residues 249–267 the composition is skewed to polar residues; sequence LATSLTEPFNGTPRLSSSA. A compositionally biased stretch (low complexity) spans 311 to 324; it reads SQSPSIPPSTSISP. The span at 342-359 shows a compositional bias: polar residues; the sequence is RAQQNWLSTAAQTGNGKS. Residues 361–377 show a composition bias toward basic and acidic residues; sequence PQEERNPEHVIEERDSP. Residues 385–410 show a composition bias toward low complexity; sequence PKSSMPTSAVTKRSCSPAAASSPSAA. A compositionally biased stretch (basic and acidic residues) spans 438 to 449; sequence DGGKGDTDKIEV. A compositionally biased stretch (gly residues) spans 519–528; it reads QTGGRAGPVK. The C2H2-type 1; degenerate zinc finger occupies 674 to 692; sequence YRCLECGDSFALERSLARH. A disordered region spans residues 754 to 816; sequence TTPIGMLSPS…GPQSPQALMP (63 aa). Positions 760 to 775 are enriched in low complexity; that stretch reads LSPSLSSPPLTSSTTP. Residues 781–802 show a composition bias toward polar residues; that stretch reads APSTSSPLKDSPSPGTASTQPS. Residues 830–853 form a C2H2-type 2; degenerate zinc finger; the sequence is FKCPECQAQFLSKAELVTHFQQIR. C2H2-type zinc fingers lie at residues 919-942, 947-970, 982-1004, and 1013-1036; these read YRCS…QTAH, HKCP…TSQH, YKCV…FDTH, and FKCP…KTAH. The disordered stretch occupies residues 1041 to 1120; that stretch reads VKAETPPTTS…QVSSPESGNM (80 aa). The span at 1043 to 1057 shows a compositional bias: low complexity; the sequence is AETPPTTSSPVSAPA. The segment covering 1058–1075 has biased composition (polar residues); the sequence is GNSTSKPKPATENNSDEL. A compositionally biased stretch (acidic residues) spans 1080 to 1111; it reads GEEEEEGEDEEGEQEGEEREDEEEEENEEEEQ. A C2H2-type 7 zinc finger spans residues 1122-1145; that stretch reads WRCKECKKRFPEREDYIDHMKNEH. A C2H2-type 8; degenerate zinc finger spans residues 1205 to 1227; the sequence is WHCSEGKRTFSSRLILEKHIRVR. The interval 1225 to 1310 is disordered; it reads RVRHGIRSRQ…EEEDGTFRCT (86 aa). 2 consecutive C2H2-type zinc fingers follow at residues 1307–1329 and 1337–1360; these read FRCT…IPVH and QQCL…FITH. Residues 1362-1392 are disordered; it reads LRQGQHDRNASPGASPQYGSPSSPKAGEDGD. The segment covering 1373–1384 has biased composition (polar residues); it reads PGASPQYGSPSS. A C2H2-type 11 zinc finger spans residues 1395 to 1425; it reads VSCRVCGRRFDKASDLNTHFRTHGMAFITAH.

This sequence belongs to the krueppel C2H2-type zinc-finger protein family. Widely expressed with highest levels in eye, spleen and ovary.

It localises to the nucleus. Its function is as follows. May be involved in transcriptional regulation. This is Zinc finger protein 687b (znf687b) from Danio rerio (Zebrafish).